Here is a 111-residue protein sequence, read N- to C-terminus: Phosphoribosyl-ATP pyrophosphatase (111 aa).

Belongs to the PRA-PH family.

It localises to the cytoplasm. It carries out the reaction 1-(5-phospho-beta-D-ribosyl)-ATP + H2O = 1-(5-phospho-beta-D-ribosyl)-5'-AMP + diphosphate + H(+). Its pathway is amino-acid biosynthesis; L-histidine biosynthesis; L-histidine from 5-phospho-alpha-D-ribose 1-diphosphate: step 2/9. The polypeptide is Phosphoribosyl-ATP pyrophosphatase (hisE) (Pseudomonas aeruginosa (strain ATCC 15692 / DSM 22644 / CIP 104116 / JCM 14847 / LMG 12228 / 1C / PRS 101 / PAO1)).